The primary structure comprises 399 residues: Putative glutamate--cysteine ligase 2 (399 aa).

Positions 377–399 (PAVGSSHGRTDPSRNGGPSHAGA) are disordered.

Belongs to the glutamate--cysteine ligase type 2 family. YbdK subfamily.

It carries out the reaction L-cysteine + L-glutamate + ATP = gamma-L-glutamyl-L-cysteine + ADP + phosphate + H(+). In terms of biological role, ATP-dependent carboxylate-amine ligase which exhibits weak glutamate--cysteine ligase activity. The sequence is that of Putative glutamate--cysteine ligase 2 from Thermobifida fusca (strain YX).